A 70-amino-acid chain; its full sequence is DNA-directed RNA polymerases I, II, and III subunit rpabc5 (70 aa).

4 residues coordinate Zn(2+): Cys7, Cys10, Cys44, and Cys45.

The protein belongs to the archaeal Rpo10/eukaryotic RPB10 RNA polymerase subunit family. Component of the RNA polymerase I (Pol I), RNA polymerase II (Pol II) and RNA polymerase III (Pol III) complexes.

The protein resides in the nucleus. Its function is as follows. DNA-dependent RNA polymerase catalyzes the transcription of DNA into RNA using the four ribonucleoside triphosphates as substrates. Common component of RNA polymerases I, II and III which synthesize ribosomal RNA precursors, mRNA precursors and many functional non-coding RNAs, and a small RNAs, such as 5S rRNA and tRNAs, respectively. Pol II is the central component of the basal RNA polymerase II transcription machinery. Pols are composed of mobile elements that move relative to each other. In Pol II, RBP10 is part of the core element with the central large cleft. This is DNA-directed RNA polymerases I, II, and III subunit rpabc5 (polr2l) from Dictyostelium discoideum (Social amoeba).